The chain runs to 1017 residues: MAGELISFGIQNLWNLLSQECELFQGVEDQVTELKRDLNMLSSFLKDANAKKHTSAVVKNCVEEIKEIIYDGEDTIETFVLEQNLGKTSGIKKSIRRLACIIPDRRRYALGIGGLSNRISKVIRDMQSFGVQQAIVDGGYKQPQGDKQREMRQKFSKDDDSDFVGLEANVKKLVGYLVDEANVQVVSITGMGGLGKTTLAKQVFNHEDVKHQFDGLSWVCVSQDFTRMNVWQKILRDLKPKEEEKKIMEMTQDTLQGELIRLLETSKSLIVLDDIWEKEDWELIKPIFPPTKGWKVLLTSRNESVAMRRNTSYINFKPECLTTEDSWTLFQRIALPMKDAAEFKIDEEKEELGKLMIKHCGGLPLAIRVLGGMLAEKYTSHDWRRLSENIGSHLVGGRTNFNDDNNNTCNNVLSLSFEELPSYLKHCFLYLAHFPEDYEIKVENLSYYWAAEGIFQPRHYDGETIRDVGDVYIEELVRRNMVISERDVKTSRFETCHLHDMMREVCLLKAKEENFLQITSSRPSTANLQSTVTSRRFVYQYPTTLHVEKDINNPKLRALVVVTLGSWNLAGSSFTRLELLRVLDLIEVKIKGGKLASCIGKLIHLRYLSLEYAEVTHIPYSLGNLKLLIYLNLASFGRSTFVPNVLMGMQELRYLALPSDMGRKTKLELSNLVKLETLENFSTENSSLEDLCGMVRLSTLNIKLIEETSLETLAASIGGLKYLEKLEIYDHGSEMRTKEAGIVFDFVHLKRLWLKLYMPRLSTEQHFPSHLTTLYLESCRLEEDPMPILEKLLQLKELELGFESFSGKKMVCSSGGFPQLQRLSLLKLEEWEDWKVEESSMPLLRTLDIQVCRKLKQLPDEHLPSHLTSISLFFCCLEKDPLPTLGRLVYLKELQLGFRTFSGRIMVCSGGGFPQLQKLSIYRLEEWEEWIVEQGSMPFLHTLYIDDCPKLKKLPDGLQFIYSLKNLKISERWKERLSEGGEEYYKVQHIPSVEFYHRVLHIFRSVGGDITGRLLMR.

Residues 25-52 (QGVEDQVTELKRDLNMLSSFLKDANAKK) adopt a coiled-coil conformation. The 314-residue stretch at 147 to 460 (KQREMRQKFS…AEGIFQPRHY (314 aa)) folds into the NB-ARC domain. Position 190–197 (190–197 (GMGGLGKT)) interacts with ATP. LRR repeat units lie at residues 602-627 (LIHL…NLKL), 649-674 (MQEL…NLVK), 675-699 (LETL…RLST), 768-791 (PSHL…ILEK), 792-819 (LLQL…GFPQ), 841-865 (MPLL…HLPS), and 937-962 (MPFL…QFIY).

The protein belongs to the disease resistance NB-LRR family.

Its function is as follows. Potential disease resistance protein. This is Probable disease resistance protein RDL5 (RDL5) from Arabidopsis thaliana (Mouse-ear cress).